The sequence spans 541 residues: Chaperonin GroEL 1 (541 aa).

ATP contacts are provided by residues 30-33 (TLGP), 87-91 (DGTTT), glycine 414, 478-480 (NAA), and aspartate 494.

This sequence belongs to the chaperonin (HSP60) family. In terms of assembly, forms a cylinder of 14 subunits composed of two heptameric rings stacked back-to-back. Interacts with the co-chaperonin GroES.

It is found in the cytoplasm. The catalysed reaction is ATP + H2O + a folded polypeptide = ADP + phosphate + an unfolded polypeptide.. Functionally, together with its co-chaperonin GroES, plays an essential role in assisting protein folding. The GroEL-GroES system forms a nano-cage that allows encapsulation of the non-native substrate proteins and provides a physical environment optimized to promote and accelerate protein folding. The chain is Chaperonin GroEL 1 from Thermobifida fusca (strain YX).